Consider the following 81-residue polypeptide: Protease inhibitor 1 (81 aa).

An N-terminal signal peptide occupies residues 1–24 (MSSGGLLLLLGLLTLWAELTPVSG). Residues 29 to 79 (CELPAETGPCKARIRAFYYNPHSHKCLEFTYGGCKGNANNFKTIDECNRTC) enclose the BPTI/Kunitz inhibitor domain. 3 disulfides stabilise this stretch: Cys-29/Cys-79, Cys-38/Cys-62, and Cys-54/Cys-75.

As to expression, expressed by the venom gland.

It localises to the secreted. Its function is as follows. Snake venom serine protease inhibitor. This chain is Protease inhibitor 1, found in Walterinnesia aegyptia (Desert black snake).